The sequence spans 73 residues: Large ribosomal subunit protein bL31 (73 aa).

This sequence belongs to the bacterial ribosomal protein bL31 family. Type A subfamily. Part of the 50S ribosomal subunit.

In terms of biological role, binds the 23S rRNA. In Synechococcus sp. (strain JA-3-3Ab) (Cyanobacteria bacterium Yellowstone A-Prime), this protein is Large ribosomal subunit protein bL31.